Reading from the N-terminus, the 350-residue chain is Histidinol-phosphate aminotransferase 1 (350 aa).

Residue Lys-210 is modified to N6-(pyridoxal phosphate)lysine.

This sequence belongs to the class-II pyridoxal-phosphate-dependent aminotransferase family. Histidinol-phosphate aminotransferase subfamily. In terms of assembly, homodimer. The cofactor is pyridoxal 5'-phosphate.

It catalyses the reaction L-histidinol phosphate + 2-oxoglutarate = 3-(imidazol-4-yl)-2-oxopropyl phosphate + L-glutamate. It participates in amino-acid biosynthesis; L-histidine biosynthesis; L-histidine from 5-phospho-alpha-D-ribose 1-diphosphate: step 7/9. In Pseudomonas fluorescens (strain Pf0-1), this protein is Histidinol-phosphate aminotransferase 1.